Here is a 362-residue protein sequence, read N- to C-terminus: Peptide chain release factor 1 (362 aa).

N5-methylglutamine is present on glutamine 237. Basic and acidic residues predominate over residues 284–295; sequence EEEKRQAEETST. Residues 284-304 form a disordered region; the sequence is EEEKRQAEETSTRRNLVASGD.

Belongs to the prokaryotic/mitochondrial release factor family. In terms of processing, methylated by PrmC. Methylation increases the termination efficiency of RF1.

It localises to the cytoplasm. Functionally, peptide chain release factor 1 directs the termination of translation in response to the peptide chain termination codons UAG and UAA. The chain is Peptide chain release factor 1 from Pseudoalteromonas atlantica (strain T6c / ATCC BAA-1087).